The primary structure comprises 360 residues: Phospho-N-acetylmuramoyl-pentapeptide-transferase (360 aa).

A run of 10 helical transmembrane segments spans residues 3-23 (SILV…PYLI), 52-72 (MGGV…HLTV), 81-101 (GLLV…DDFI), 115-135 (AKLV…MQFA), 153-173 (ITVI…AISG), 187-207 (LAGG…FWQF), 230-250 (IALV…WNAA), 254-274 (IFMG…LSMV), 282-302 (IIIG…IVVF), and 333-353 (FWVL…ADWL).

It belongs to the glycosyltransferase 4 family. MraY subfamily. Mg(2+) is required as a cofactor.

The protein localises to the cell membrane. The catalysed reaction is UDP-N-acetyl-alpha-D-muramoyl-L-alanyl-gamma-D-glutamyl-meso-2,6-diaminopimeloyl-D-alanyl-D-alanine + di-trans,octa-cis-undecaprenyl phosphate = di-trans,octa-cis-undecaprenyl diphospho-N-acetyl-alpha-D-muramoyl-L-alanyl-D-glutamyl-meso-2,6-diaminopimeloyl-D-alanyl-D-alanine + UMP. Its pathway is cell wall biogenesis; peptidoglycan biosynthesis. Its function is as follows. Catalyzes the initial step of the lipid cycle reactions in the biosynthesis of the cell wall peptidoglycan: transfers peptidoglycan precursor phospho-MurNAc-pentapeptide from UDP-MurNAc-pentapeptide onto the lipid carrier undecaprenyl phosphate, yielding undecaprenyl-pyrophosphoryl-MurNAc-pentapeptide, known as lipid I. This is Phospho-N-acetylmuramoyl-pentapeptide-transferase from Saccharopolyspora erythraea (strain ATCC 11635 / DSM 40517 / JCM 4748 / NBRC 13426 / NCIMB 8594 / NRRL 2338).